Reading from the N-terminus, the 33-residue chain is Natriuretic peptide NP2 (33 aa).

An intrachain disulfide couples C10 to C26.

Expressed by the venom gland.

The protein localises to the secreted. Its function is as follows. Snake venom natriuretic peptide that shows an increase in perfusion pressure, urinary flow and glomerular filtration rate. Reduces total and proximal tubular transport of sodium. In the aortic ring assay, causes a relaxant effect in endothelium-intact thoracic aortic rings precontracted with phenylephrine in the presence and absence of isatin, a natriuretic receptor antagonist. This Crotalus durissus cascavella (Northeastern Brazilian rattlesnake) protein is Natriuretic peptide NP2.